Here is a 777-residue protein sequence, read N- to C-terminus: C6 finger domain transcription factor adaR (777 aa).

The interval 1 to 20 (MEQRSSPARSLPPRKTTTTP) is disordered. A DNA-binding region (zn(2)-C6 fungal-type) is located at residues 24-50 (CELCRKRKVKCDKLTPCTNCAASGTVC). 6 disordered regions span residues 61–85 (GRHATRPRRVSSPPPTSAPGETDRI), 111–144 (NSHSHTRTPSATSREQSVQLSDTSTFQTAPNPNT), 182–213 (SSLAGGQEGPIPSSDSAKSEPPNDDGIQVLGL), 419–440 (PQHINDSDFDPTTAAHSDPNRE), 468–496 (RKVDGGIPTPTSSTSGTSTSRSRTCDPSW), and 655–699 (LPPS…PTGS). The span at 475-489 (PTPTSSTSGTSTSRS) shows a compositional bias: low complexity. Residues 668–677 (ATPPTFPGVP) are compositionally biased toward pro residues.

It is found in the nucleus. Transcription factor that specifically regulates the expression of the ada gene cluster involved in the biosynthesis of the linear tetracyclic TAN-1612 neuropeptide Y receptor antagonist. This is C6 finger domain transcription factor adaR from Aspergillus niger (strain ATCC MYA-4892 / CBS 513.88 / FGSC A1513).